Reading from the N-terminus, the 309-residue chain is 15-cis-phytoene synthase (309 aa).

The interval 290 to 309 is disordered; it reads LTSRMRAHPPRPAHLWQRPL.

This sequence belongs to the phytoene/squalene synthase family. ATP serves as cofactor. Mn(2+) is required as a cofactor. It depends on Mg(2+) as a cofactor.

It carries out the reaction 2 (2E,6E,10E)-geranylgeranyl diphosphate = 15-cis-phytoene + 2 diphosphate. The protein operates within carotenoid biosynthesis; phytoene biosynthesis. Inhibited by phosphate ions and squalestatin. Involved in the biosynthesis of carotenoids. Catalyzes the condensation of two molecules of geranylgeranyl diphosphate (GGPP) to give prephytoene diphosphate (PPPP) and the subsequent rearrangement of the cyclopropylcarbinyl intermediate to yield the 15-cis-phytoene isomer. This is 15-cis-phytoene synthase (crtB) from Pantoea ananas (Erwinia uredovora).